Reading from the N-terminus, the 369-residue chain is Anhydro-N-acetylmuramic acid kinase (369 aa).

12 to 19 (GTSLDGVD) is an ATP binding site.

Belongs to the anhydro-N-acetylmuramic acid kinase family.

The enzyme catalyses 1,6-anhydro-N-acetyl-beta-muramate + ATP + H2O = N-acetyl-D-muramate 6-phosphate + ADP + H(+). It functions in the pathway amino-sugar metabolism; 1,6-anhydro-N-acetylmuramate degradation. Its pathway is cell wall biogenesis; peptidoglycan recycling. Catalyzes the specific phosphorylation of 1,6-anhydro-N-acetylmuramic acid (anhMurNAc) with the simultaneous cleavage of the 1,6-anhydro ring, generating MurNAc-6-P. Is required for the utilization of anhMurNAc either imported from the medium or derived from its own cell wall murein, and thus plays a role in cell wall recycling. This chain is Anhydro-N-acetylmuramic acid kinase, found in Escherichia coli O81 (strain ED1a).